Here is a 1164-residue protein sequence, read N- to C-terminus: IgA FC receptor (1164 aa).

A signal peptide spans 1–37 (MFKSNYERKMRYSIRKFSVGVASVAVASLFMGSVAHA). Disordered stretches follow at residues 54-75 (KPYP…ELET) and 167-220 (HEEV…EDKD). The segment covering 59–73 (MAQTDQGNNSSSSEL) has biased composition (polar residues). Composition is skewed to basic and acidic residues over residues 167-176 (HEEVEKDKKA) and 183-220 (KQSD…EDKD). 2 igA-binding regions span residues 199-438 (NHQK…KIEL) and 439-826 (TVSP…ETNT). The region spanning 434–534 (QKIELTVSPE…VEKTFTITVQ (101 aa)) is the Ig-like domain. Residues 536–564 (KEEKQVPKTPEQKDSKTEEKVPQEPKSND) are compositionally biased toward basic and acidic residues. 2 disordered regions span residues 536–567 (KEEK…DKNQ) and 823–947 (ETNT…PDGL). Pro residues predominate over residues 911 to 920 (PKIPEPPKTP). An LPXTG sorting signal motif is present at residues 1132-1136 (LPYTG). The residue at position 1135 (Thr-1135) is a Pentaglycyl murein peptidoglycan amidated threonine. Residues 1136–1164 (GVASNLVLEIMGLLGLIGTSFIAMKRRKS) constitute a propeptide, removed by sortase.

Its subcellular location is the secreted. The protein localises to the cell wall. The protein is IgA FC receptor (bag) of Streptococcus agalactiae.